Consider the following 105-residue polypeptide: Pyruvate synthase subunit PorD (105 aa).

4Fe-4S ferredoxin-type domains follow at residues 44–73 and 74–103; these read FKPE…LDEE and GYPV…MVRE. Residues cysteine 53, cysteine 56, cysteine 59, cysteine 63, cysteine 83, cysteine 86, cysteine 89, and cysteine 93 each coordinate [4Fe-4S] cluster.

As to quaternary structure, heterotetramer of one alpha, one beta, one delta and one gamma chain. [4Fe-4S] cluster is required as a cofactor.

This Pyrococcus furiosus (strain ATCC 43587 / DSM 3638 / JCM 8422 / Vc1) protein is Pyruvate synthase subunit PorD (porD).